Consider the following 638-residue polypeptide: Chaperone protein HtpG (638 aa).

Residues 1–345 (MTTETFEFQV…AQDLSLNVSR (345 aa)) are a; substrate-binding. Residues 346 to 560 (EILQQDRHIR…AGELTPALEN (215 aa)) form a b region. The tract at residues 561–638 (MYRAMGQEVP…LMADRLERTL (78 aa)) is c.

It belongs to the heat shock protein 90 family. In terms of assembly, homodimer.

It is found in the cytoplasm. Its function is as follows. Molecular chaperone. Has ATPase activity. In Streptomyces coelicolor (strain ATCC BAA-471 / A3(2) / M145), this protein is Chaperone protein HtpG.